Consider the following 917-residue polypeptide: Outer kinetochore KNL1 complex subunit SPC105 (917 aa).

Positions 1 to 17 are enriched in basic and acidic residues; sequence MNVDERSRIGGREKDAG. The segment at 1–38 is disordered; that stretch reads MNVDERSRIGGREKDAGPGKGILKQNQSSQMTSSFLEN. The span at 24-36 shows a compositional bias: polar residues; that stretch reads KQNQSSQMTSSFL. The residue at position 77 (serine 77) is a Phosphoserine. Disordered stretches follow at residues 93 to 172, 235 to 282, and 324 to 343; these read QNNE…MEMT, TEYE…QPME, and HHIDESPSEKHAFSSNKRRK. Over residues 106–126 the composition is skewed to polar residues; it reads STNSPTKISSQEEPLVTSTQI. Residues 127 to 137 show a composition bias toward basic and acidic residues; it reads DDARTEEKTAA. Positions 146–149 match the MELT motif; it reads MELT. Position 149 is a phosphothreonine; by MPS1 (threonine 149). Polar residues predominate over residues 156-170; the sequence is PDSNKASQHDPTSME. The interacts with the BUB1-BUB3 complex stretch occupies residues 165–183; that stretch reads DPTSMEMTEVFPRSIRQKN. 2 short sequence motifs (MELT; degenerate) span residues 169–172 and 232–235; these read MEMT and IDLT. Phosphothreonine; by MPS1 occurs at positions 172 and 235. The segment covering 245-257 has biased composition (polar residues); it reads NSVSRSTGKSSDY. Composition is skewed to basic and acidic residues over residues 258-273 and 324-335; these read SVERSNDKSDLSKSEN and HHIDESPSEKHA. Threonine 356 carries the post-translational modification Phosphothreonine. Serine 380 is modified (phosphoserine). Residues 397 to 427 form a disordered region; it reads DVFTIEPGTEDTGMQTATDDEEDGENVDDNG. Residues 414-424 are compositionally biased toward acidic residues; that stretch reads TDDEEDGENVD. The required for interaction with KRE28 stretch occupies residues 507–638; that stretch reads PILEVEAFRC…IKEEIRSLKN (132 aa). A coiled-coil region spans residues 591 to 628; it reads ELILAENLNTLKREYEKLNEEVEKVNSIRGKIRKLNEA.

In terms of assembly, component of the KNL1/SPC105 complex composed of SPC105 and KRE28. Part of the outer kinetochore KMN network that includes the KNL1, MIS12 and NDC80 complexes. Interacts (via phosphorylated MELT motifs) with BUB1 and BUB3 in the BUB1-BUB3 complex; the interaction is direct. Interacts with the MIS12 complex subunits MTW1 (via C-terminus) and NSL1 (via C-terminus). Interacts with the NDC80 complex subunits SPC24 and SPC25. Interacts with CNN1 (via N-terminus).

Its subcellular location is the nucleus. The protein resides in the chromosome. It is found in the centromere. It localises to the kinetochore. Functionally, acts as a component of the outer kinetochore KNL1 complex that serves as a docking point for spindle assembly checkpoint components and mediates microtubule-kinetochore interactions. Kinetochores, consisting of a centromere-associated inner segment and a microtubule-contacting outer segment, play a crucial role in chromosome segregation by mediating the physical connection between centromeric DNA and spindle microtubules. The outer kinetochore is made up of the ten-subunit KMN network, comprising the MIS12, NDC80 and KNL1 complexes, and auxiliary microtubule-associated components; together they connect the outer kinetochore with the inner kinetochore, bind microtubules, and mediate interactions with mitotic checkpoint proteins that delay anaphase until chromosomes are bioriented on the spindle. Recruits the BUB1-BUB3 complex to kinetochores when phosphorylated by MPS1, to support spindle assembly checkpoint signaling; the effect is reversed by protein phosphatase 1 (PP1). The KNL1 complex is required for kinetochore binding by the kMAPs (kinetochore-bound microtubule-associated proteins) BIM1, BIK1 and SLK19, and motors CIN8 and KAR3. The sequence is that of Outer kinetochore KNL1 complex subunit SPC105 (SPC105) from Saccharomyces cerevisiae (strain ATCC 204508 / S288c) (Baker's yeast).